Reading from the N-terminus, the 212-residue chain is ATP-dependent Clp protease proteolytic subunit (212 aa).

Ser-106 (nucleophile) is an active-site residue. His-131 is an active-site residue.

Belongs to the peptidase S14 family. In terms of assembly, fourteen ClpP subunits assemble into 2 heptameric rings which stack back to back to give a disk-like structure with a central cavity, resembling the structure of eukaryotic proteasomes.

The protein localises to the cytoplasm. It carries out the reaction Hydrolysis of proteins to small peptides in the presence of ATP and magnesium. alpha-casein is the usual test substrate. In the absence of ATP, only oligopeptides shorter than five residues are hydrolyzed (such as succinyl-Leu-Tyr-|-NHMec, and Leu-Tyr-Leu-|-Tyr-Trp, in which cleavage of the -Tyr-|-Leu- and -Tyr-|-Trp bonds also occurs).. Functionally, cleaves peptides in various proteins in a process that requires ATP hydrolysis. Has a chymotrypsin-like activity. Plays a major role in the degradation of misfolded proteins. In Rhodopseudomonas palustris (strain HaA2), this protein is ATP-dependent Clp protease proteolytic subunit.